Consider the following 151-residue polypeptide: MIHLQHTPPAVTALMIPAVLSCWSLHPHQIYYLHSTYLCMVILMKVHLRVFIEVENLGRVMNILADEGVTGFYIVEYKGVSPTEWKGFSVKEDPESAISLIHDYARDAVLICSVVDEELVEPIVNRFGEELASEKYTIIEIPIRRIIVNSP.

This sequence to M.jannaschii MJ1244 and MJ1245.

This is an uncharacterized protein from Methanothermobacter thermautotrophicus (strain ATCC 29096 / DSM 1053 / JCM 10044 / NBRC 100330 / Delta H) (Methanobacterium thermoautotrophicum).